The following is a 368-amino-acid chain: Trans-enoyl reductase TwmE (368 aa).

Serine 49–lysine 52 serves as a coordination point for NADP(+). Phenylalanine 135 to threonine 142 is a binding site for substrate. NADP(+) contacts are provided by residues serine 204–serine 207, tyrosine 222, and leucine 269–glutamate 270. Serine 290–tyrosine 294 lines the substrate pocket. Histidine 360–proline 361 contacts NADP(+).

The protein belongs to the zinc-containing alcohol dehydrogenase family. In terms of assembly, monomer.

The protein operates within secondary metabolite biosynthesis. In terms of biological role, trans-enoyl reductase; part of the gene cluster that mediates the biosynthesis of wortmanamides A and B, reduced long-chain polyketides amidated with a specific omega-amino acid, 5-aminopentanoic acid (5PA). The PKS modules of TwmB are involved in the synthesis of the polyketide backbone, whereas the non-canonical C domain of TwmB is a bonafide condensation domain that specifically selects 5PA and catalyzes amidation to release polyketide chain. The C domain clearly prefers C16 and C18 fatty acyl substrates, which is consistent with simultaneous formation of both octaketide and nonaketide acyl amides wortmanamides A and B. Because TwmB lacks a designated enoylreductase (ER) domain, the required activity is provided the enoyl reductase TwmE. The roles of the remaining enzymes have still to be clarified. The polypeptide is Trans-enoyl reductase TwmE (Talaromyces wortmannii (Penicillium wortmannii)).